The chain runs to 169 residues: NADH-quinone oxidoreductase subunit B (169 aa).

[4Fe-4S] cluster contacts are provided by C45, C46, C111, and C141.

Belongs to the complex I 20 kDa subunit family. As to quaternary structure, NDH-1 is composed of 14 different subunits. Subunits NuoB, C, D, E, F, and G constitute the peripheral sector of the complex. [4Fe-4S] cluster is required as a cofactor.

Its subcellular location is the cell membrane. The enzyme catalyses a quinone + NADH + 5 H(+)(in) = a quinol + NAD(+) + 4 H(+)(out). In terms of biological role, NDH-1 shuttles electrons from NADH, via FMN and iron-sulfur (Fe-S) centers, to quinones in the respiratory chain. The immediate electron acceptor for the enzyme in this species is believed to be a menaquinone. Couples the redox reaction to proton translocation (for every two electrons transferred, four hydrogen ions are translocated across the cytoplasmic membrane), and thus conserves the redox energy in a proton gradient. The polypeptide is NADH-quinone oxidoreductase subunit B (Clostridium beijerinckii (strain ATCC 51743 / NCIMB 8052) (Clostridium acetobutylicum)).